The following is a 512-amino-acid chain: Maturase K (512 aa).

This sequence belongs to the intron maturase 2 family. MatK subfamily.

The protein localises to the plastid. The protein resides in the chloroplast. Functionally, usually encoded in the trnK tRNA gene intron. Probably assists in splicing its own and other chloroplast group II introns. The sequence is that of Maturase K from Oenothera biennis (German evening primrose).